Here is a 202-residue protein sequence, read N- to C-terminus: Small ribosomal subunit protein uS4c (202 aa).

An S4 RNA-binding domain is found at Met-90 to Ile-153.

Belongs to the universal ribosomal protein uS4 family. In terms of assembly, part of the 30S ribosomal subunit. Contacts protein S5. The interaction surface between S4 and S5 is involved in control of translational fidelity.

The protein localises to the plastid. It is found in the chloroplast. In terms of biological role, one of the primary rRNA binding proteins, it binds directly to 16S rRNA where it nucleates assembly of the body of the 30S subunit. With S5 and S12 plays an important role in translational accuracy. This Hypopterygium laricinum (Moss) protein is Small ribosomal subunit protein uS4c (rps4).